The following is a 447-amino-acid chain: C4-dicarboxylate transport protein (447 aa).

Transmembrane regions (helical) follow at residues 21 to 41 (HLYV…YFAP), 57 to 77 (LVKM…IAGM), 92 to 112 (IYFL…VNIV), 141 to 161 (SLIG…LASG), 163 to 183 (ILQV…VGEA), 201 to 221 (LVAI…AYTV), 232 to 252 (LAML…IVLG), 320 to 340 (IYMT…LSWG), 345 to 365 (LLAV…AGFV), and 368 to 388 (AATL…IFGV).

Belongs to the dicarboxylate/amino acid:cation symporter (DAACS) (TC 2.A.23) family.

The protein localises to the cell inner membrane. Responsible for the transport of dicarboxylates such as succinate, fumarate, and malate from the periplasm across the membrane. In Granulibacter bethesdensis (strain ATCC BAA-1260 / CGDNIH1), this protein is C4-dicarboxylate transport protein.